The chain runs to 367 residues: Gibberellin 20 oxidase 3 (367 aa).

The 107-residue stretch at 198–304 (DGDPVMRLNH…RRSLTFFLNP (107 aa)) folds into the Fe2OG dioxygenase domain. Y208 provides a ligand contact to 2-oxoglutarate. 3 residues coordinate Fe cation: H223, D225, and H285. Residues R295 and S297 each contribute to the 2-oxoglutarate site.

Belongs to the iron/ascorbate-dependent oxidoreductase family. Requires Fe(2+) as cofactor. L-ascorbate is required as a cofactor.

The catalysed reaction is gibberellin A12 + 2 2-oxoglutarate + 3 O2 + H(+) = gibberellin A9 + 2 succinate + 3 CO2 + 2 H2O. It catalyses the reaction gibberellin A53 + 2 2-oxoglutarate + 3 O2 + H(+) = gibberellin A20 + 2 succinate + 3 CO2 + 2 H2O. Functionally, key oxidase enzyme in the biosynthesis of gibberellin. Catalyzes the formation of bioactive gibberellins (GAs) via a three-step oxidation at C-20 of the GA skeleton. Controls the elongation of the vegetative shoot and plant height by the regulation of active gibberellin levels. This chain is Gibberellin 20 oxidase 3, found in Oryza sativa subsp. japonica (Rice).